The following is a 171-amino-acid chain: Neuronal vesicle trafficking-associated protein 2 (171 aa).

The disordered stretch occupies residues 1–21; sequence MVKLNSNPSEKGAKPPSVEDG. Over 1–71 the chain is Cytoplasmic; sequence MVKLNSNPSE…FRVPKIAEFT (71 aa). The chain crosses the membrane as a helical; Signal-anchor for type II membrane protein span at residues 72–92; that stretch reads VTILVSLALAFLACIVFLVVY. At 93 to 171 the chain is on the lumenal side; sequence KAFTYDHSCP…EPKPPKTQGH (79 aa).

Belongs to the NSG family.

Its subcellular location is the membrane. It is found in the golgi apparatus. The protein localises to the trans-Golgi network membrane. It localises to the cell projection. The protein resides in the dendrite. Its subcellular location is the endosome membrane. It is found in the early endosome membrane. The protein localises to the late endosome membrane. It localises to the lysosome lumen. The protein resides in the cytoplasmic vesicle membrane. Its subcellular location is the golgi stack membrane. It is found in the endosome. The protein localises to the multivesicular body membrane. The polypeptide is Neuronal vesicle trafficking-associated protein 2 (Bos taurus (Bovine)).